The primary structure comprises 179 residues: Large ribosomal subunit protein uL6 (179 aa).

The protein belongs to the universal ribosomal protein uL6 family. Part of the 50S ribosomal subunit.

Functionally, this protein binds to the 23S rRNA, and is important in its secondary structure. It is located near the subunit interface in the base of the L7/L12 stalk, and near the tRNA binding site of the peptidyltransferase center. The polypeptide is Large ribosomal subunit protein uL6 (Crocosphaera subtropica (strain ATCC 51142 / BH68) (Cyanothece sp. (strain ATCC 51142))).